Here is a 257-residue protein sequence, read N- to C-terminus: Beta-fibrinogenase mucrofibrase-1 (257 aa).

The first 18 residues, 1–18 (MVLIRVLANLLILQLSYA), serve as a signal peptide directing secretion. A propeptide spanning residues 19–24 (QKSSEL) is cleaved from the precursor. In terms of domain architecture, Peptidase S1 spans 25-248 (VIGGDECNIN…HLDWIKGIIA (224 aa)). 6 cysteine pairs are disulfide-bonded: cysteine 31–cysteine 162, cysteine 49–cysteine 65, cysteine 97–cysteine 255, cysteine 141–cysteine 209, cysteine 173–cysteine 188, and cysteine 199–cysteine 224. Active-site charge relay system residues include histidine 64 and aspartate 109. Serine 203 acts as the Charge relay system in catalysis.

It belongs to the peptidase S1 family. Snake venom subfamily. Monomer. Expressed by the venom gland.

The protein resides in the secreted. Its function is as follows. Snake venom serine protease with strong beta-fibrinogenolytic activities, angiotensin I (AGT)-degrading activities and strong kallikrein-like activities in vitro, releasing bradykinin from kininogen (KNG1). Intravenous injection strongly lowers blood pressure in experimental rats, which may be explained by the action on angiotensin I and kininogen. The polypeptide is Beta-fibrinogenase mucrofibrase-1 (Protobothrops mucrosquamatus (Taiwan habu)).